Here is a 552-residue protein sequence, read N- to C-terminus: Mothers against decapentaplegic homolog 4 (552 aa).

A mediates interaction with ZBTB7A region spans residues 1-322 (MDNMSITNTP…PISNHPAPEY (322 aa)). Positions 18–142 (SIVHSLMCHR…YERVVSPGID (125 aa)) constitute an MH1 domain. K37 bears the N6-acetyllysine mark. Residues 44–69 (VKKLKEKKDELDSLITAITTNGAHPS) form a required for interaction with TSC22D1 region. C71 is a binding site for Zn(2+). Residue K113 forms a Glycyl lysine isopeptide (Lys-Gly) (interchain with G-Cter in SUMO2) linkage. Zn(2+) is bound by residues C115, C127, and H132. Positions 167 to 193 (EGQPSLPTEGHSIQTIQHPPSNRASTE) are disordered. Residues 177–193 (HSIQTIQHPPSNRASTE) show a composition bias toward polar residues. The interval 275 to 320 (PYTPNLPHHQNGHLQHHPPMPPHPGHYWPVHNELAFQPPISNHPAP) is SAD. One can recognise an MH2 domain in the interval 323 to 552 (WCSIAYFEMD…MPIADPQPLD (230 aa)). K428 and K507 each carry N6-acetyllysine. K519 participates in a covalent cross-link: Glycyl lysine isopeptide (Lys-Gly) (interchain with G-Cter in ubiquitin).

Belongs to the dwarfin/SMAD family. In terms of assembly, monomer; in the absence of TGF-beta activation. Heterotrimer; on TGF-beta activation. Heterotrimer composed of two molecules of a C-terminally phosphorylated R-SMAD molecule, SMAD2 or SMAD3, and one molecule of SMAD4 to form the transcriptional active SMAD2/SMAD3-SMAD4 complex. Found in a ternary complex composed of SMAD4, STK11/LKB1 and STK11IP. Found in a complex with SMAD1 and YY1. Identified in a complex that contains at least ZNF451, SMAD2, SMAD3 and SMAD4. Interacts with ATF2, COPS5, DACH1, MSG1, SKI, STK11/LKB1, STK11IP and TRIM33. Associates with ZNF423 or ZNF521 in response to BMP2 leading to activate transcription of BMP target genes. Interacts with USP9X. Interacts with RBPMS. Interacts with WWTR1 (via coiled-coil domain). Interacts with CITED1 and CITED2. Interacts with PDPK1 (via PH domain). Interacts with VPS39; this interaction affects heterodimer formation with SMAD3, but not with SMAD2, and leads to inhibition of SMAD3-dependent transcription activation. Interactions with VPS39 and SMAD2 may be mutually exclusive. Interacts (via MH2 domain) with ZNF451 (via N-terminal zinc-finger domains). Interacts with ZC3H3. Interacts weakly with ZNF8. Interacts with NUP93 and IPO7; translocates SMAD4 to the nucleus through the NPC upon BMP7 stimulation resulting in activation of SMAD4 signaling. Interacts with CREB3L1, the interaction takes place upon TGFB1 induction and SMAD4 acts as a CREB3L1 coactivator to induce the expression of genes involved in the assembly of collagen extracellular matrix. Interacts with DLX1. Interacts with ZBTB7A; the interaction is direct and stimulated by TGFB1. Interacts with CREBBP; the recruitment of this transcriptional coactivator is negatively regulated by ZBTB7A. Interacts with EP300; the interaction with this transcriptional coactivator is negatively regulated by ZBTB7A. Interacts with HDAC1. Interacts (via MH2 domain) with ZMIZ1 (via SP-RING-type domain); in the TGF-beta signaling pathway increases the activity of the SMAD3/SMAD4 transcriptional complex. Interacts (via N-terminus) with TSC22D1. Phosphorylated by PDPK1. Post-translationally, monoubiquitinated on Lys-519 by E3 ubiquitin-protein ligase TRIM33. Monoubiquitination hampers its ability to form a stable complex with activated SMAD2/3 resulting in inhibition of TGF-beta/BMP signaling cascade. Deubiquitination by USP9X restores its competence to mediate TGF-beta signaling.

It is found in the cytoplasm. It localises to the nucleus. In terms of biological role, common SMAD (co-SMAD) is the coactivator and mediator of signal transduction by TGF-beta (transforming growth factor). Component of the heterotrimeric SMAD2/SMAD3-SMAD4 complex that forms in the nucleus and is required for the TGF-mediated signaling. Promotes binding of the SMAD2/SMAD4/FAST-1 complex to DNA and provides an activation function required for SMAD1 or SMAD2 to stimulate transcription. Component of the multimeric SMAD3/SMAD4/JUN/FOS complex which forms at the AP1 promoter site; required for synergistic transcriptional activity in response to TGF-beta. Acts synergistically with SMAD1 and YY1 in bone morphogenetic protein (BMP)-mediated cardiac-specific gene expression. Binds to SMAD binding elements (SBEs) (5'-GTCT/AGAC-3') within BMP response element (BMPRE) of cardiac activating regions. May act as a tumor suppressor. Positively regulates PDPK1 kinase activity by stimulating its dissociation from the 14-3-3 protein YWHAQ which acts as a negative regulator. In muscle physiology, plays a central role in the balance between atrophy and hypertrophy. When recruited by MSTN, promotes atrophy response via phosphorylated SMAD2/4. MSTN decrease causes SMAD4 release and subsequent recruitment by the BMP pathway to promote hypertrophy via phosphorylated SMAD1/5/8. This is Mothers against decapentaplegic homolog 4 (Smad4) from Rattus norvegicus (Rat).